Reading from the N-terminus, the 517-residue chain is GMP synthase [glutamine-hydrolyzing] (517 aa).

Positions 11–202 constitute a Glutamine amidotransferase type-1 domain; that stretch reads KIIVLDFGSQ…AFDVCEAKAN (192 aa). Residue Cys-88 is the Nucleophile of the active site. Catalysis depends on residues His-176 and Glu-178. The GMPS ATP-PPase domain occupies 203-392; that stretch reads WSMNDFIDMQ…LGMPEDLVWR (190 aa). ATP is bound at residue 230-236; it reads SGGVDSS.

In terms of assembly, homodimer.

It carries out the reaction XMP + L-glutamine + ATP + H2O = GMP + L-glutamate + AMP + diphosphate + 2 H(+). Its pathway is purine metabolism; GMP biosynthesis; GMP from XMP (L-Gln route): step 1/1. In terms of biological role, catalyzes the synthesis of GMP from XMP. In Pediococcus pentosaceus (strain ATCC 25745 / CCUG 21536 / LMG 10740 / 183-1w), this protein is GMP synthase [glutamine-hydrolyzing].